The chain runs to 505 residues: Lysine--tRNA ligase 1 (505 aa).

2 residues coordinate Mg(2+): Asp415 and Glu422.

Belongs to the class-II aminoacyl-tRNA synthetase family. As to quaternary structure, homodimer. Mg(2+) serves as cofactor.

The protein localises to the cytoplasm. The enzyme catalyses tRNA(Lys) + L-lysine + ATP = L-lysyl-tRNA(Lys) + AMP + diphosphate. This chain is Lysine--tRNA ligase 1 (lysS1), found in Mycobacterium bovis (strain ATCC BAA-935 / AF2122/97).